Consider the following 389-residue polypeptide: tRNA (cytosine(72)-C(5))-methyltransferase (389 aa).

The region spanning 92-167 (LPVVVANKYA…LAVEVTLPKF (76 aa)) is the PUA domain. Residues 209-215 (AAAPGGK), aspartate 233, arginine 238, aspartate 260, aspartate 277, and tyrosine 304 each bind S-adenosyl-L-methionine. The active-site Nucleophile is cysteine 327.

This sequence belongs to the class I-like SAM-binding methyltransferase superfamily. RsmB/NOP family.

It carries out the reaction cytidine(72) in tRNA + S-adenosyl-L-methionine = 5-methylcytidine(72) in tRNA + S-adenosyl-L-homocysteine + H(+). It catalyses the reaction cytidine(72) in tRNA(Thr) + S-adenosyl-L-methionine = 5-methylcytidine(72) in tRNA(Thr) + S-adenosyl-L-homocysteine + H(+). The catalysed reaction is cytidine(72) in tRNA(Cys) + S-adenosyl-L-methionine = 5-methylcytidine(72) in tRNA(Cys) + S-adenosyl-L-homocysteine + H(+). Functionally, S-adenosyl-L-methionine-dependent methyltransferase that specifically methylates the C5 position of cytosine 72 in several tRNAs. This modification appears to slightly promote the thermal stability of P.horikoshii tRNAs, but does not affect their amino acid accepting activity. Four elements in the acceptor stems of tRNAs are essential for substrate recognition by this enzyme: the target site C72, the 3'-CCA terminus, U73 or G73, and the second base pair C2:G71. This chain is tRNA (cytosine(72)-C(5))-methyltransferase, found in Pyrococcus horikoshii (strain ATCC 700860 / DSM 12428 / JCM 9974 / NBRC 100139 / OT-3).